We begin with the raw amino-acid sequence, 877 residues long: GTPase activating protein homolog 2 (877 aa).

The region spanning 14–285 (FKFTDNLWDG…SVEMIDITND (272 aa)) is the F-BAR domain. Residues 130-214 (QEGIKLKQDM…SNCDEEYREQ (85 aa)) adopt a coiled-coil conformation. Residues 374 to 560 (VSLDELMNRQ…TLIKQIPPPL (187 aa)) form the Rho-GAP domain. Disordered stretches follow at residues 589-612 (DQLSNDDNNNSNTNTSNISIGSGS), 644-704 (LPPL…AEPT), and 749-800 (AATP…LAST). Low complexity-rich tracts occupy residues 593 to 612 (NDDNNNSNTNTSNISIGSGS), 653 to 676 (SGSGNESNSSSSNSTTTPTGSPTT), and 749 to 779 (AATPTTTTPTTTPTTTTSPTTATIPAVSTST). The span at 780–800 (IKTSSPDRTTPLTSSPPLAST) shows a compositional bias: polar residues.

The protein resides in the cytoplasm. It localises to the contractile vacuole. In terms of biological role, rho GTPase-activating protein involved in the signal transduction pathway. Regulator of the contractile vacuole network as well as involved in driving vacuole emptying. This Dictyostelium discoideum (Social amoeba) protein is GTPase activating protein homolog 2 (mgp2).